We begin with the raw amino-acid sequence, 348 residues long: Rhodopsin (348 aa).

M1 bears the N-acetylmethionine mark. Topologically, residues 1–36 (MNGTEGPNFYVPFSNATGVVRSPFEYPQYYLAEPWQ) are extracellular. N-linked (GlcNAc...) asparagine glycans are attached at residues N2 and N15. Residues 37-61 (FSMLAAYMFLLIVLGFPINFLTLYV) traverse the membrane as a helical segment. At 62 to 73 (TVQHKKLRTPLN) the chain is on the cytoplasmic side. Residues 74-96 (YILLNLAVADLFMVFGGFTTTLY) form a helical membrane-spanning segment. The Extracellular segment spans residues 97-110 (TSLHGYFVFGPTGC). Cysteines 110 and 187 form a disulfide. A helical transmembrane segment spans residues 111–133 (NLEGFFATLGGEIALWSLVVLAI). Residues 134–136 (ERY) carry the 'Ionic lock' involved in activated form stabilization motif. At 134-152 (ERYVVICKPMSNFRFGENH) the chain is on the cytoplasmic side. Residues 153–173 (AIMGVVFTWIMALACAAPPLV) form a helical membrane-spanning segment. The Extracellular segment spans residues 174–202 (GWSRYIPEGMQCSCGVDYYTLKPEVNNES). E201 lines the Zn(2+) pocket. Residues 203-224 (FVIYMFVVHFTIPLIVIFFCYG) form a helical membrane-spanning segment. Residues 225 to 252 (QLVFTVKEAAAQQQESATTQKAEKEVTR) are Cytoplasmic-facing. Residues 253 to 274 (MVILMVVFFLICWFPYAGVAFY) form a helical membrane-spanning segment. The Extracellular portion of the chain corresponds to 275–286 (IFTHQGSNFGPI). Q279 is a binding site for Zn(2+). A helical membrane pass occupies residues 287-308 (FMTLPAFFAKSSSIYNPVIYIM). Position 296 is an N6-(retinylidene)lysine (K296). The Cytoplasmic segment spans residues 309–348 (MNKQFRNCMLTTLCCGKNILGDDEASATASKTETSQVAPA). 2 S-palmitoyl cysteine lipidation sites follow: C322 and C323. An interaction with SAG region spans residues 330–348 (DDEASATASKTETSQVAPA). Residue S334 is modified to Phosphoserine. At T336 the chain carries Phosphothreonine. The residue at position 338 (S338) is a Phosphoserine. A phosphothreonine mark is found at T340 and T342. S343 bears the Phosphoserine mark.

Belongs to the G-protein coupled receptor 1 family. Opsin subfamily. As to quaternary structure, homodimer. May form a complex composed of RHO, GRK1 and RCVRN in a Ca(2+)-dependent manner; RCVRN prevents the interaction between GRK1 and RHO. Interacts with GRK1. Interacts (phosphorylated form) with SAG. Interacts with GNAT1. Interacts with GNAT3. SAG and G-proteins compete for a common binding site. Interacts with PRCD; the interaction promotes PRCD stability. Forms a complex with ASAP1 and ARF4. Forms a complex with ASAP1, RAB11A, Rabin8/RAB3IP, ARF4 and RAB11FIP3; the complex regulates Golgi-to-cilia rhodopsin/RHO transport in photoreceptors. Phosphorylated on some or all of the serine and threonine residues present in the C-terminal region. Post-translationally, contains one covalently linked retinal chromophore. Upon light absorption, the covalently bound 11-cis-retinal is converted to all-trans-retinal. After hydrolysis of the Schiff base and release of the covalently bound all-trans-retinal, active rhodopsin is regenerated by binding of a fresh molecule of 11-cis-retinal.

The protein localises to the membrane. The protein resides in the cell projection. It localises to the cilium. Its subcellular location is the photoreceptor outer segment. In terms of biological role, photoreceptor required for image-forming vision at low light intensity. Required for photoreceptor cell viability after birth. Light-induced isomerization of 11-cis to all-trans retinal triggers a conformational change that activates signaling via G-proteins. Subsequent receptor phosphorylation mediates displacement of the bound G-protein alpha subunit by the arrestin SAG and terminates signaling. The polypeptide is Rhodopsin (RHO) (Cricetulus griseus (Chinese hamster)).